The primary structure comprises 542 residues: Chaperonin GroEL (542 aa).

ATP contacts are provided by residues 29–32 (TLGP), 86–90 (DGTTT), Gly-413, 478–480 (DAL), and Asp-494.

Belongs to the chaperonin (HSP60) family. Forms a cylinder of 14 subunits composed of two heptameric rings stacked back-to-back. Interacts with the co-chaperonin GroES.

The protein resides in the cytoplasm. It catalyses the reaction ATP + H2O + a folded polypeptide = ADP + phosphate + an unfolded polypeptide.. Its function is as follows. Together with its co-chaperonin GroES, plays an essential role in assisting protein folding. The GroEL-GroES system forms a nano-cage that allows encapsulation of the non-native substrate proteins and provides a physical environment optimized to promote and accelerate protein folding. This is Chaperonin GroEL from Clostridioides difficile (strain 630) (Peptoclostridium difficile).